The chain runs to 175 residues: Shikimate kinase (175 aa).

Position 14–19 (14–19 (GAGKST)) interacts with ATP. Ser-18 serves as a coordination point for Mg(2+). Positions 36, 60, and 82 each coordinate substrate. Residue Arg-120 participates in ATP binding. A substrate-binding site is contributed by Arg-140. Residue Gln-157 coordinates ATP.

The protein belongs to the shikimate kinase family. In terms of assembly, monomer. Requires Mg(2+) as cofactor.

It localises to the cytoplasm. It catalyses the reaction shikimate + ATP = 3-phosphoshikimate + ADP + H(+). Its pathway is metabolic intermediate biosynthesis; chorismate biosynthesis; chorismate from D-erythrose 4-phosphate and phosphoenolpyruvate: step 5/7. In terms of biological role, catalyzes the specific phosphorylation of the 3-hydroxyl group of shikimic acid using ATP as a cosubstrate. The sequence is that of Shikimate kinase from Mannheimia succiniciproducens (strain KCTC 0769BP / MBEL55E).